A 265-amino-acid polypeptide reads, in one-letter code: MSVRVVVCGALGRMGRRIIELALQDKDVEVVGGVEHPDCVPSIDLGEALGKEELKGKPLTSRLEELLPYTDVVIEFSGNPTAAVGHAELTTLEKKAIVIGTTGFTKQEIEQIKEFSKNAPVLLSPNMSLGVNLLFKLAEIAAKVLKDKNFDAEIMEIHHRFKKDAPSGTAMKLAEILSETLEKKNLVFGRKGEAPRKEDEIGVMALRGGDVVGDHTVYFLGFGERIELTHRATSRDTFAKGAVEAAKWIKGKEPGFYTMFDVLGL.

NAD(+)-binding positions include 9–14 (GALGRM), 100–102 (GTT), and 124–127 (SPNM). Histidine 158 serves as the catalytic Proton donor/acceptor. Histidine 159 provides a ligand contact to (S)-2,3,4,5-tetrahydrodipicolinate. Lysine 162 (proton donor) is an active-site residue. 168-169 (GT) lines the (S)-2,3,4,5-tetrahydrodipicolinate pocket.

It belongs to the DapB family.

The protein localises to the cytoplasm. The enzyme catalyses (S)-2,3,4,5-tetrahydrodipicolinate + NAD(+) + H2O = (2S,4S)-4-hydroxy-2,3,4,5-tetrahydrodipicolinate + NADH + H(+). It carries out the reaction (S)-2,3,4,5-tetrahydrodipicolinate + NADP(+) + H2O = (2S,4S)-4-hydroxy-2,3,4,5-tetrahydrodipicolinate + NADPH + H(+). It functions in the pathway amino-acid biosynthesis; L-lysine biosynthesis via DAP pathway; (S)-tetrahydrodipicolinate from L-aspartate: step 4/4. In terms of biological role, catalyzes the conversion of 4-hydroxy-tetrahydrodipicolinate (HTPA) to tetrahydrodipicolinate. This chain is 4-hydroxy-tetrahydrodipicolinate reductase, found in Aquifex aeolicus (strain VF5).